A 375-amino-acid chain; its full sequence is Succinyl-diaminopimelate desuccinylase (375 aa).

His66 is a Zn(2+) binding site. Residue Asp68 is part of the active site. Position 99 (Asp99) interacts with Zn(2+). Glu133 acts as the Proton acceptor in catalysis. The Zn(2+) site is built by Glu134, Glu162, and His348.

The protein belongs to the peptidase M20A family. DapE subfamily. In terms of assembly, homodimer. It depends on Zn(2+) as a cofactor. The cofactor is Co(2+).

The enzyme catalyses N-succinyl-(2S,6S)-2,6-diaminopimelate + H2O = (2S,6S)-2,6-diaminopimelate + succinate. It functions in the pathway amino-acid biosynthesis; L-lysine biosynthesis via DAP pathway; LL-2,6-diaminopimelate from (S)-tetrahydrodipicolinate (succinylase route): step 3/3. Its function is as follows. Catalyzes the hydrolysis of N-succinyl-L,L-diaminopimelic acid (SDAP), forming succinate and LL-2,6-diaminopimelate (DAP), an intermediate involved in the bacterial biosynthesis of lysine and meso-diaminopimelic acid, an essential component of bacterial cell walls. The protein is Succinyl-diaminopimelate desuccinylase of Salmonella dublin (strain CT_02021853).